Here is a 770-residue protein sequence, read N- to C-terminus: Multifunctional tryptophan biosynthesis protein (770 aa).

In terms of domain architecture, Glutamine amidotransferase type-1 spans 25-225 (NVILIDNYDS…LKLTAGTWEG (201 aa)). Position 76–78 (76–78 (GPG)) interacts with L-glutamine. The active-site Nucleophile; for GATase activity is C104. L-glutamine is bound by residues Q108 and 154–155 (SL). Residues H199 and E201 each act as for GATase activity in the active site. Residues 228–251 (KHFGEQSSTTKATVPSNPPPKTDK) form a disordered region. Positions 232 to 242 (EQSSTTKATVP) are enriched in polar residues. The segment at 255 to 519 (ILERIYDHRR…DTATFIAELL (265 aa)) is indole-3-glycerol phosphate synthase. The tract at residues 535-770 (LVKICGTRSE…RAFVQAVRGL (236 aa)) is N-(5'-phosphoribosyl)anthranilate isomerase.

The catalysed reaction is N-(5-phospho-beta-D-ribosyl)anthranilate = 1-(2-carboxyphenylamino)-1-deoxy-D-ribulose 5-phosphate. It carries out the reaction 1-(2-carboxyphenylamino)-1-deoxy-D-ribulose 5-phosphate + H(+) = (1S,2R)-1-C-(indol-3-yl)glycerol 3-phosphate + CO2 + H2O. The enzyme catalyses chorismate + L-glutamine = anthranilate + pyruvate + L-glutamate + H(+). Its pathway is amino-acid biosynthesis; L-tryptophan biosynthesis; L-tryptophan from chorismate: step 1/5. The protein operates within amino-acid biosynthesis; L-tryptophan biosynthesis; L-tryptophan from chorismate: step 3/5. It participates in amino-acid biosynthesis; L-tryptophan biosynthesis; L-tryptophan from chorismate: step 4/5. Trifunctional enzyme bearing the Gln amidotransferase (GATase) domain of anthranilate synthase, indole-glycerolphosphate synthase, and phosphoribosylanthranilate isomerase activities. In Aspergillus niger, this protein is Multifunctional tryptophan biosynthesis protein (trpC).